Here is a 314-residue protein sequence, read N- to C-terminus: Transcriptional regulatory protein GlnL (314 aa).

A Response regulatory domain is found at 2–118; it reads RFFIADDDRA…EIVTVLQKVK (117 aa). Asp54 bears the 4-aspartylphosphate mark.

In terms of processing, phosphorylated by GlnK.

Its subcellular location is the cytoplasm. Functionally, member of the two-component regulatory system GlnL/GlnK that positively regulates the expression of the glsA-glnT operon in response to glutamine. GlnL binds the promoter region of glsA-glnT in vitro. The sequence is that of Transcriptional regulatory protein GlnL (glnL) from Bacillus subtilis (strain 168).